The primary structure comprises 194 residues: uncharacterized protein (194 aa).

The 166-residue stretch at 20–185 (RIFIDTETTG…ADCRMTLGII (166 aa)) folds into the Exonuclease domain.

This is an uncharacterized protein from Escherichia coli (Bacteriophage 186).